The following is a 136-amino-acid chain: Large ribosomal subunit protein bL21 (136 aa).

The disordered stretch occupies residues 107–136 (RAAADRKTAPKRASAKAAADQTTAAQATAE). Residues 121 to 136 (AKAAADQTTAAQATAE) show a composition bias toward low complexity.

This sequence belongs to the bacterial ribosomal protein bL21 family. Part of the 50S ribosomal subunit. Contacts protein L20.

In terms of biological role, this protein binds to 23S rRNA in the presence of protein L20. This Acidothermus cellulolyticus (strain ATCC 43068 / DSM 8971 / 11B) protein is Large ribosomal subunit protein bL21.